We begin with the raw amino-acid sequence, 115 residues long: NADH-ubiquinone oxidoreductase chain 3 (115 aa).

Helical transmembrane passes span 4 to 24 (FIVM…AFWL), 55 to 75 (FFLV…LLPL), and 86 to 106 (ITML…AYEW).

The protein belongs to the complex I subunit 3 family. In terms of assembly, core subunit of respiratory chain NADH dehydrogenase (Complex I) which is composed of 45 different subunits. Interacts with TMEM186. Interacts with TMEM242.

Its subcellular location is the mitochondrion inner membrane. The enzyme catalyses a ubiquinone + NADH + 5 H(+)(in) = a ubiquinol + NAD(+) + 4 H(+)(out). Core subunit of the mitochondrial membrane respiratory chain NADH dehydrogenase (Complex I) which catalyzes electron transfer from NADH through the respiratory chain, using ubiquinone as an electron acceptor. Essential for the catalytic activity of complex I. The protein is NADH-ubiquinone oxidoreductase chain 3 of Reithrodontomys fulvescens (Fulvous harvest mouse).